A 388-amino-acid polypeptide reads, in one-letter code: Dual-specificity RNA methyltransferase RlmN (388 aa).

The active-site Proton acceptor is the E109. The region spanning 115-354 (EDDRATLCVS…TIVRKTRGDD (240 aa)) is the Radical SAM core domain. An intrachain disulfide couples C122 to C359. [4Fe-4S] cluster is bound by residues C129, C133, and C136. Residues 183 to 184 (GE), S215, 237 to 239 (SLH), and N316 each bind S-adenosyl-L-methionine. Catalysis depends on C359, which acts as the S-methylcysteine intermediate.

Belongs to the radical SAM superfamily. RlmN family. It depends on [4Fe-4S] cluster as a cofactor.

The protein localises to the cytoplasm. The catalysed reaction is adenosine(2503) in 23S rRNA + 2 reduced [2Fe-2S]-[ferredoxin] + 2 S-adenosyl-L-methionine = 2-methyladenosine(2503) in 23S rRNA + 5'-deoxyadenosine + L-methionine + 2 oxidized [2Fe-2S]-[ferredoxin] + S-adenosyl-L-homocysteine. It catalyses the reaction adenosine(37) in tRNA + 2 reduced [2Fe-2S]-[ferredoxin] + 2 S-adenosyl-L-methionine = 2-methyladenosine(37) in tRNA + 5'-deoxyadenosine + L-methionine + 2 oxidized [2Fe-2S]-[ferredoxin] + S-adenosyl-L-homocysteine. Its function is as follows. Specifically methylates position 2 of adenine 2503 in 23S rRNA and position 2 of adenine 37 in tRNAs. m2A2503 modification seems to play a crucial role in the proofreading step occurring at the peptidyl transferase center and thus would serve to optimize ribosomal fidelity. The polypeptide is Dual-specificity RNA methyltransferase RlmN (Cronobacter sakazakii (strain ATCC BAA-894) (Enterobacter sakazakii)).